Reading from the N-terminus, the 116-residue chain is UPF0654 protein C869.09 (116 aa).

The interval 32 to 116 (LKEHGSESHY…LLEEVDDESK (85 aa)) is disordered. Polar residues predominate over residues 39 to 48 (SHYTTGTTRG). A compositionally biased stretch (basic and acidic residues) spans 49–64 (QKADADDAGELREEGF).

This sequence belongs to the UPF0654 (con-6) family.

The protein localises to the cytoplasm. The protein resides in the nucleus. In Schizosaccharomyces pombe (strain 972 / ATCC 24843) (Fission yeast), this protein is UPF0654 protein C869.09.